We begin with the raw amino-acid sequence, 100 residues long: Urease subunit gamma (100 aa).

It belongs to the urease gamma subunit family. Heterotrimer of UreA (gamma), UreB (beta) and UreC (alpha) subunits. Three heterotrimers associate to form the active enzyme.

The protein localises to the cytoplasm. The catalysed reaction is urea + 2 H2O + H(+) = hydrogencarbonate + 2 NH4(+). The protein operates within nitrogen metabolism; urea degradation; CO(2) and NH(3) from urea (urease route): step 1/1. The chain is Urease subunit gamma from Synechococcus sp. (strain CC9605).